A 150-amino-acid polypeptide reads, in one-letter code: Large ribosomal subunit protein uL15 (150 aa).

It belongs to the universal ribosomal protein uL15 family. In terms of assembly, part of the 50S ribosomal subunit.

Binds to the 23S rRNA. This is Large ribosomal subunit protein uL15 from Rickettsia prowazekii (strain Madrid E).